The primary structure comprises 203 residues: Twist-related protein 1 (203 aa).

A compositionally biased stretch (low complexity) spans 1-18 (MMQDVSSSPVSPADDSLS). A disordered region spans residues 1–105 (MMQDVSSSPV…SGGGSPQSYE (105 aa)). Positions 34–43 (RGGRKRRSSR) are enriched in basic residues. Gly residues-rich tracts occupy residues 46 to 65 (AGGGAGPGGAAGGGVGGGDE) and 80 to 100 (GCGGGGGSAGGGGGSSSGGGS). A bHLH domain is found at 109–160 (TQRVMANVRGRQRTQSLNEAFAALRKIIPTLPSDKLSKIQTLKLAARYIDFL). Residues 162–192 (QVLQSDELDSKMASCSYVAHERLSYAFSVWR) form a sufficient for transactivation activity region.

As to quaternary structure, efficient DNA binding requires dimerization with another bHLH protein. Homodimer or heterodimer with E proteins such as TCF3. ID1 binds preferentially to TCF3 but does not interact efficiently with TWIST1 so ID1 levels control the amount of TCF3 available to dimerize with TWIST and thus determine the type of dimer formed.

The protein resides in the nucleus. In terms of biological role, acts as a transcriptional regulator. Inhibits myogenesis by sequestrating E proteins, inhibiting trans-activation by MEF2, and inhibiting DNA-binding by MYOD1 through physical interaction. This interaction probably involves the basic domains of both proteins. Also represses expression of pro-inflammatory cytokines such as TNFA and IL1B. Regulates cranial suture patterning and fusion. Activates transcription as a heterodimer with E proteins. Regulates gene expression differentially, depending on dimer composition. Homodimers induce expression of FGFR2 and POSTN while heterodimers repress FGFR2 and POSTN expression and induce THBS1 expression. Heterodimerization is also required for osteoblast differentiation. Represses the activity of the circadian transcriptional activator: NPAS2-BMAL1 heterodimer. The chain is Twist-related protein 1 (TWIST1) from Callithrix jacchus (White-tufted-ear marmoset).